Here is a 462-residue protein sequence, read N- to C-terminus: NEDD8-activating enzyme E1 catalytic subunit (462 aa).

A2 is subject to N-acetylalanine. The tract at residues H53–C70 is interaction with UBE2M N-terminus. Residues D100 to K124 and I148 to A171 each bind ATP. 2 interaction with UBE2M N-terminus regions span residues R157–I161 and P192–M217. Residues L227–P229 are interaction with NEDD8. C237 functions as the Glycyl thioester intermediate in the catalytic mechanism. Interaction with NAE1 stretches follow at residues M242 to H248 and Y292 to R295. The tract at residues I331–P338 is interaction with UBE2M N-terminus. The segment at Y352–E357 is interaction with NEDD8. Positions S368–T462 are interaction with UBE2M core domain.

It belongs to the ubiquitin-activating E1 family. UBA3 subfamily. In terms of assembly, heterodimer of UBA3 and NAE1. Interacts with NEDD8, UBE2F and UBE2M. Binds ESR1 and ESR2 with bound steroid ligand. Interacts with TBATA. As to expression, ubiquitously expressed.

It carries out the reaction ATP + [NEDD8 protein] + [E1 NEDD8-activating enzyme]-L-cysteine = AMP + diphosphate + [E1 NEDD8-activating enzyme]-S-[NEDD8 protein]-yl-L-cysteine.. The protein operates within protein modification; protein neddylation. With respect to regulation, binding of TP53BP2 to the regulatory subunit NAE1 decreases activity. In terms of biological role, catalytic subunit of the dimeric UBA3-NAE1 E1 enzyme. E1 activates NEDD8 by first adenylating its C-terminal glycine residue with ATP, thereafter linking this residue to the side chain of the catalytic cysteine, yielding a NEDD8-UBA3 thioester and free AMP. E1 finally transfers NEDD8 to the catalytic cysteine of UBE2M. Down-regulates steroid receptor activity. Necessary for cell cycle progression. The sequence is that of NEDD8-activating enzyme E1 catalytic subunit (Uba3) from Rattus norvegicus (Rat).